A 371-amino-acid polypeptide reads, in one-letter code: tRNA-specific 2-thiouridylase MnmA (371 aa).

ATP contacts are provided by residues 9 to 16 and Met35; that span reads AMSGGVDS. Cys109 (nucleophile) is an active-site residue. Cys109 and Cys207 are oxidised to a cystine. Gly133 contributes to the ATP binding site. Residues 157-159 are interaction with tRNA; that stretch reads KDQ. The Cysteine persulfide intermediate role is filled by Cys207.

The protein belongs to the MnmA/TRMU family.

It is found in the cytoplasm. The catalysed reaction is S-sulfanyl-L-cysteinyl-[protein] + uridine(34) in tRNA + AH2 + ATP = 2-thiouridine(34) in tRNA + L-cysteinyl-[protein] + A + AMP + diphosphate + H(+). Its function is as follows. Catalyzes the 2-thiolation of uridine at the wobble position (U34) of tRNA, leading to the formation of s(2)U34. In Solibacter usitatus (strain Ellin6076), this protein is tRNA-specific 2-thiouridylase MnmA.